Reading from the N-terminus, the 106-residue chain is Large ribosomal subunit protein uL24 (106 aa).

Belongs to the universal ribosomal protein uL24 family. In terms of assembly, part of the 50S ribosomal subunit.

One of two assembly initiator proteins, it binds directly to the 5'-end of the 23S rRNA, where it nucleates assembly of the 50S subunit. Its function is as follows. One of the proteins that surrounds the polypeptide exit tunnel on the outside of the subunit. This Clostridium acetobutylicum (strain ATCC 824 / DSM 792 / JCM 1419 / IAM 19013 / LMG 5710 / NBRC 13948 / NRRL B-527 / VKM B-1787 / 2291 / W) protein is Large ribosomal subunit protein uL24.